Here is a 941-residue protein sequence, read N- to C-terminus: Isoleucine--tRNA ligase (941 aa).

The short motif at 58–68 is the 'HIGH' region element; it reads PYANGDIHIGH. Position 562 (Glu562) interacts with L-isoleucyl-5'-AMP. The 'KMSKS' region motif lies at 603–607; that stretch reads KMSKS. Lys606 is an ATP binding site. Positions 904, 907, 924, and 927 each coordinate Zn(2+).

Belongs to the class-I aminoacyl-tRNA synthetase family. IleS type 1 subfamily. As to quaternary structure, monomer. Zn(2+) is required as a cofactor.

It localises to the cytoplasm. It catalyses the reaction tRNA(Ile) + L-isoleucine + ATP = L-isoleucyl-tRNA(Ile) + AMP + diphosphate. Catalyzes the attachment of isoleucine to tRNA(Ile). As IleRS can inadvertently accommodate and process structurally similar amino acids such as valine, to avoid such errors it has two additional distinct tRNA(Ile)-dependent editing activities. One activity is designated as 'pretransfer' editing and involves the hydrolysis of activated Val-AMP. The other activity is designated 'posttransfer' editing and involves deacylation of mischarged Val-tRNA(Ile). This is Isoleucine--tRNA ligase from Alkalilimnicola ehrlichii (strain ATCC BAA-1101 / DSM 17681 / MLHE-1).